The sequence spans 120 residues: Putative 15 kDa capsid protein (120 aa).

The protein resides in the virion. The polypeptide is Putative 15 kDa capsid protein (P15) (Orgyia pseudotsugata (Douglas-fir tussock moth)).